A 397-amino-acid polypeptide reads, in one-letter code: Acetate kinase 2 (397 aa).

Position 10 (asparagine 10) interacts with Mg(2+). Lysine 17 contributes to the ATP binding site. Arginine 90 provides a ligand contact to substrate. Catalysis depends on aspartate 147, which acts as the Proton donor/acceptor. Residues 207-211, 281-283, and 329-333 each bind ATP; these read HLGNG, DCR, and GIGEN. Glutamate 383 provides a ligand contact to Mg(2+).

The protein belongs to the acetokinase family. As to quaternary structure, homodimer. It depends on Mg(2+) as a cofactor. The cofactor is Mn(2+).

The protein localises to the cytoplasm. It carries out the reaction acetate + ATP = acetyl phosphate + ADP. It functions in the pathway metabolic intermediate biosynthesis; acetyl-CoA biosynthesis; acetyl-CoA from acetate: step 1/2. Functionally, catalyzes the formation of acetyl phosphate from acetate and ATP. Can also catalyze the reverse reaction. In Photobacterium profundum (strain SS9), this protein is Acetate kinase 2.